The primary structure comprises 182 residues: Inner membrane assembly complex subunit 17 (182 aa).

The N-terminal 45 residues, 1 to 45 (MLKRRSNALITLSRTKLFPITTVAYYHRRLLNQQRRAVSTSPKKE), are a transit peptide targeting the mitochondrion. Topologically, residues 46-107 (IKSLEDLANL…EIPVKRFIRP (62 aa)) are mitochondrial matrix. Residues 108–127 (LWMFILMGSSVYLLLHFSWW) traverse the membrane as a helical segment. Residues 128 to 158 (KLEHEERESQLKKEVEILEHQLNELIVQDKT) adopt a coiled-coil conformation. Topologically, residues 128–182 (KLEHEERESQLKKEVEILEHQLNELIVQDKTHNTSRGKGSNESTHMKPWYRRWFW) are mitochondrial intermembrane.

It belongs to the INA17 family. As to quaternary structure, component of the inner membrane assembly (INA) complex, composed of INA17 and INA22. Interacts with a subset of F(1)F(0)-ATP synthase subunits of the F(1)-domain and the peripheral stalk.

Its subcellular location is the mitochondrion inner membrane. Its function is as follows. Component of the INA complex (INAC) that promotes the biogenesis of mitochondrial F(1)F(0)-ATP synthase. INAC facilitates the assembly of the peripheral stalk and promotes the assembly of the catalytic F(1)-domain with the membrane-embedded F(0)-domain. This chain is Inner membrane assembly complex subunit 17, found in Saccharomyces cerevisiae (strain RM11-1a) (Baker's yeast).